Reading from the N-terminus, the 268-residue chain is Helix-loop-helix protein 25 (268 aa).

Positions 1-23 (MPKVIQSSMSDYRSVPYNQTPKS) are enriched in polar residues. Residues 1–29 (MPKVIQSSMSDYRSVPYNQTPKSASERKR) are disordered. A basic motif region spans residues 92–105 (ERRKVKTEREKIRR). A bHLH domain is found at 92-149 (ERRKVKTEREKIRRKKQDDCYAELKFFILNKQMGSYEQRLKLERITILEIIIDYIKHN). Residues 106–149 (KKQDDCYAELKFFILNKQMGSYEQRLKLERITILEIIIDYIKHN) are helix-loop-helix motif.

Its subcellular location is the nucleus. Functionally, probable transcription factor. Modulates lifespan and also recovery from the developmentally arrested larval state known as dauer, perhaps acting upstream of phosphatase PTEN/daf-18. Regulates expression of genes involved in cell division, cell-cycle regulation, and sexual reproduction, including daf-18. The polypeptide is Helix-loop-helix protein 25 (Caenorhabditis elegans).